The sequence spans 476 residues: Adenosylhomocysteinase (476 aa).

3 residues coordinate substrate: Thr67, Asp142, and Glu202. 203 to 205 (TTT) is an NAD(+) binding site. Residues Lys232 and Asp236 each contribute to the substrate site. NAD(+) is bound by residues Asn237, 266-271 (GYGDVG), Glu289, Asn324, 345-347 (IGH), and Asn390.

Belongs to the adenosylhomocysteinase family. The cofactor is NAD(+).

It is found in the cytoplasm. It carries out the reaction S-adenosyl-L-homocysteine + H2O = L-homocysteine + adenosine. It participates in amino-acid biosynthesis; L-homocysteine biosynthesis; L-homocysteine from S-adenosyl-L-homocysteine: step 1/1. Its function is as follows. May play a key role in the regulation of the intracellular concentration of adenosylhomocysteine. This is Adenosylhomocysteinase from Prochlorococcus marinus (strain SARG / CCMP1375 / SS120).